The chain runs to 262 residues: Octopine permease ATP-binding protein P (262 aa).

The ABC transporter domain maps to Val9–Leu254. Gly41–Ser48 provides a ligand contact to ATP.

The protein belongs to the ABC transporter superfamily.

It localises to the cell inner membrane. Functionally, component of the octopine active transport system probably consisting of four subunits: Q, M, P and T. This Rhizobium meliloti (Ensifer meliloti) protein is Octopine permease ATP-binding protein P (occP).